Reading from the N-terminus, the 209-residue chain is Lysine-rich arabinogalactan protein 18 (209 aa).

The signal sequence occupies residues 1–21 (MDRNFLLTVTLICIVVAGVGG). A disordered region spans residues 21 to 185 (GQSPISSPTK…PSADDQSGAA (165 aa)). Positions 23 to 79 (SPISSPTKSPTTPSAPTTSPTKSPAVTSPTTAPAKTPTASASSPVESPKSPAPVSES) are enriched in low complexity. 2 stretches are compositionally biased toward pro residues: residues 80-95 (SPPPTPVPESSPPVPA) and 103-119 (SSPPVPAPVADSPPAPV). Residues 132-145 (SKHKKTTKKSKKHQ) show a composition bias toward basic residues. Over residues 149-164 (APAPELLGPPAPPTES) the composition is skewed to pro residues. Gly-183 carries GPI-anchor amidated glycine lipidation. The propeptide at 184–209 (AASTRVLRNVAVGAVATAWAVLVMAF) is removed in mature form.

Belongs to the lysine-rich AGP family. O-glycosylated on the hydroxyproline residues. As to expression, predominantly expressed in flowers, and moderately expressed in roots, stems and young leaves.

It localises to the cell membrane. Its function is as follows. Proteoglycan that seems to be implicated in diverse developmental roles such as differentiation, cell-cell recognition, embryogenesis and programmed cell death. The sequence is that of Lysine-rich arabinogalactan protein 18 (AGP18) from Arabidopsis thaliana (Mouse-ear cress).